The sequence spans 195 residues: Myelin-associated neurite-outgrowth inhibitor (195 aa).

N-acetylmethionine is present on Met-1. Residues 1–18 lie on the Cytoplasmic side of the membrane; it reads MNPVYSPGSSGVPYANAK. Ser-6 carries the phosphoserine modification. The helical transmembrane segment at 19–42 threads the bilayer; that stretch reads GIGYPAGFPMGYAAAAPAYSPNMY. Residues 43 to 142 lie on the Extracellular side of the membrane; the sequence is PGANPTFQAG…PAPLPPPRGN (100 aa). Asn-46 carries N-linked (GlcNAc...) asparagine glycosylation. A helical transmembrane segment spans residues 143 to 164; the sequence is GVTMGMVAGTTMAMSAGTLLTA. Residues 165–195 are Cytoplasmic-facing; sequence HSPTPVAPHPVTVPTYRAPGTPTYSYVPPQW.

This sequence belongs to the FAM168 family. As to quaternary structure, may form homodimers. May interact with DAZAP2, FAM168A, PRDX6, RBM6, TMTC1 and YPEL2. Interacts with CDC27. Post-translationally, N-glycosylated.

The protein resides in the cytoplasm. Its subcellular location is the perinuclear region. It is found in the cell membrane. It localises to the cell projection. The protein localises to the axon. Functionally, inhibitor of neuronal axonal outgrowth. Acts as a negative regulator of CDC42 and STAT3 and a positive regulator of STMN2. Positive regulator of CDC27. The protein is Myelin-associated neurite-outgrowth inhibitor (FAM168B) of Bos taurus (Bovine).